The following is a 687-amino-acid chain: Ribonuclease E (687 aa).

In terms of domain architecture, S1 motif spans 35–117 (GDIYLGVVEN…LTGNITLPGR (83 aa)). Mg(2+)-binding residues include D296 and D339. The Zn(2+) site is built by C397 and C400. The interval 650–687 (PIKLTETMEESEVNAASTANRRRRRRSSASDSDTGEDS) is disordered. The C4 Arg-rich motif, necessary and sufficient to confer PNPase binding on another protein motif lies at 670–678 (RRRRRRSSA).

Belongs to the RNase E/G family. In terms of assembly, may form homodimers or higher order multimers. Interacts with polynucleotide phosphorylase (PNPase, pnp) via the C4 Arg-rich motif (residues 670-678). A homotetramer formed by a dimer of dimers. Requires Mg(2+) as cofactor. It depends on Zn(2+) as a cofactor.

The protein localises to the cytoplasm. The catalysed reaction is Endonucleolytic cleavage of single-stranded RNA in A- and U-rich regions.. In terms of biological role, endoribonuclease that plays a central role in rRNA and tRNA processing and mRNA decay. Has been shown to act on 9S rRNA (the precursor of 5S rRNA). This Nostoc sp. (strain PCC 7120 / SAG 25.82 / UTEX 2576) protein is Ribonuclease E.